Reading from the N-terminus, the 213-residue chain is Proton-translocating ferredoxin:NAD(+) oxidoreductase complex subunit E (213 aa).

The next 6 membrane-spanning stretches (helical) occupy residues 11–31 (GLIA…ALAT), 39–59 (FTMG…VSII), 69–89 (VPVY…VMQA), 93–113 (LLYK…IILA), 128–148 (FFDG…IGMI), and 170–190 (ALIM…VAIV).

It belongs to the NqrDE/RnfAE family. The complex is composed of six subunits: RnfA, RnfB, RnfC, RnfD, RnfE and RnfG.

It is found in the cell membrane. Functionally, part of a membrane-bound complex that couples electron transfer with translocation of ions across the membrane. Couples electron transfer from reduced ferredoxin to NAD(+) with translocation of H(+) out of the cell. Essential for energy conservation during autotrophic growth. Contributes to ATP synthesis during heterotrophic growth. This Clostridium ljungdahlii (strain ATCC 55383 / DSM 13528 / PETC) protein is Proton-translocating ferredoxin:NAD(+) oxidoreductase complex subunit E.